We begin with the raw amino-acid sequence, 134 residues long: Auxin-responsive protein SAUR40 (134 aa).

Belongs to the ARG7 family. In terms of assembly, interacts with and inhibits PP2C-D subfamily of type 2C phosphatases such as PP2C67/PP2C-D1.

The protein localises to the cytoplasm. Functionally, provide a mechanistic link between auxin and plasma membrane H(+)-ATPases (PM H(+)-ATPases, e.g. AHA1 and AHA2), and triggers PM H(+)-ATPases activity by promoting phosphorylation of their C-terminal autoinhibitory domain as a result of PP2C-D subfamily of type 2C phosphatases inhibition, thus leading to the acidification of the apoplast and the facilitation of solutes and water uptake to drive cell expansion. Plays a role in the regulation of cell expansion, root meristem patterning and auxin transport. The protein is Auxin-responsive protein SAUR40 of Arabidopsis thaliana (Mouse-ear cress).